The chain runs to 305 residues: Ornithine carbamoyltransferase (305 aa).

Carbamoyl phosphate-binding positions include 53 to 56 (STRT), Gln80, Arg104, and 131 to 134 (HPCQ). L-ornithine-binding positions include Asn162, Asp219, and 223-224 (SM). Carbamoyl phosphate contacts are provided by residues 259 to 260 (CL) and Arg287.

The protein belongs to the aspartate/ornithine carbamoyltransferase superfamily. OTCase family.

It localises to the cytoplasm. It carries out the reaction carbamoyl phosphate + L-ornithine = L-citrulline + phosphate + H(+). It participates in amino-acid biosynthesis; L-arginine biosynthesis; L-arginine from L-ornithine and carbamoyl phosphate: step 1/3. Its function is as follows. Reversibly catalyzes the transfer of the carbamoyl group from carbamoyl phosphate (CP) to the N(epsilon) atom of ornithine (ORN) to produce L-citrulline. This chain is Ornithine carbamoyltransferase, found in Psychrobacter cryohalolentis (strain ATCC BAA-1226 / DSM 17306 / VKM B-2378 / K5).